Here is a 529-residue protein sequence, read N- to C-terminus: Protein PAT1 homolog 2 (529 aa).

The tract at residues 153-183 is disordered; it reads QILQQQQRWRRRRSPTARSVPAQKPWSREPA.

It belongs to the PAT1 family. Interacts with LSM1.

It localises to the cytoplasm. Its subcellular location is the nucleus. Its function is as follows. RNA-binding protein that acts as a translational repressor. This is Protein PAT1 homolog 2 (Patl2) from Mus musculus (Mouse).